A 203-amino-acid chain; its full sequence is Glycerol-3-phosphate acyltransferase (203 aa).

5 helical membrane passes run 4–24 (IAYL…AVIF), 56–76 (LGVL…GFYL), 80–100 (ISVI…PVFF), 115–135 (IIPM…FVFL), and 149–169 (LIVP…VALV).

This sequence belongs to the PlsY family. Probably interacts with PlsX.

The protein resides in the cell inner membrane. It catalyses the reaction an acyl phosphate + sn-glycerol 3-phosphate = a 1-acyl-sn-glycero-3-phosphate + phosphate. Its pathway is lipid metabolism; phospholipid metabolism. Catalyzes the transfer of an acyl group from acyl-phosphate (acyl-PO(4)) to glycerol-3-phosphate (G3P) to form lysophosphatidic acid (LPA). This enzyme utilizes acyl-phosphate as fatty acyl donor, but not acyl-CoA or acyl-ACP. The protein is Glycerol-3-phosphate acyltransferase of Glaesserella parasuis serovar 5 (strain SH0165) (Haemophilus parasuis).